The primary structure comprises 340 residues: Ketol-acid reductoisomerase (NADP(+)) (340 aa).

Residues 3–182 (VQMEYEKDVK…GAARVGLLET (180 aa)) form the KARI N-terminal Rossmann domain. Residues 26-29 (YGSQ), Arg-49, Ser-53, and 83-86 (DEIQ) each bind NADP(+). His-108 is a catalytic residue. Gly-134 lines the NADP(+) pocket. The region spanning 183 to 328 (TYKEETEEDL…AELRKAMPFV (146 aa)) is the KARI C-terminal knotted domain. Mg(2+)-binding residues include Asp-191, Glu-195, Glu-227, and Glu-231. A substrate-binding site is contributed by Ser-252.

Belongs to the ketol-acid reductoisomerase family. It depends on Mg(2+) as a cofactor.

It catalyses the reaction (2R)-2,3-dihydroxy-3-methylbutanoate + NADP(+) = (2S)-2-acetolactate + NADPH + H(+). It carries out the reaction (2R,3R)-2,3-dihydroxy-3-methylpentanoate + NADP(+) = (S)-2-ethyl-2-hydroxy-3-oxobutanoate + NADPH + H(+). The protein operates within amino-acid biosynthesis; L-isoleucine biosynthesis; L-isoleucine from 2-oxobutanoate: step 2/4. It functions in the pathway amino-acid biosynthesis; L-valine biosynthesis; L-valine from pyruvate: step 2/4. In terms of biological role, involved in the biosynthesis of branched-chain amino acids (BCAA). Catalyzes an alkyl-migration followed by a ketol-acid reduction of (S)-2-acetolactate (S2AL) to yield (R)-2,3-dihydroxy-isovalerate. In the isomerase reaction, S2AL is rearranged via a Mg-dependent methyl migration to produce 3-hydroxy-3-methyl-2-ketobutyrate (HMKB). In the reductase reaction, this 2-ketoacid undergoes a metal-dependent reduction by NADPH to yield (R)-2,3-dihydroxy-isovalerate. This is Ketol-acid reductoisomerase (NADP(+)) from Streptococcus thermophilus (strain CNRZ 1066).